The chain runs to 950 residues: Protocadherin alpha-13 (950 aa).

The N-terminal stretch at 1–29 (MLSSWQGGPRPRQLLLWLLILAAWETGSG) is a signal peptide. The Extracellular segment spans residues 30–697 (QLHYSVPEEA…GPEAALVDVN (668 aa)). Cadherin domains are found at residues 34–133 (SVPE…PPIF), 134–242 (PESK…APEF), 243–350 (YQSV…APEV), 351–455 (TITS…APAF), 456–565 (AQPE…APAL), and 581–678 (MPRS…APQA). N-linked (GlcNAc...) asparagine glycans are attached at residues Asn257 and Asn265. N-linked (GlcNAc...) asparagine glycosylation occurs at Asn548. The chain crosses the membrane as a helical span at residues 698–718 (VYLIIAICAVSSLLVLTLLLY). Residues 719–950 (TALRCSAPPT…GNSTTDNSDQ (232 aa)) are Cytoplasmic-facing. PXXP repeat units follow at residues 734-737 (PGKP), 774-777 (PSLP), 799-802 (PRQP), 832-835 (PGGP), 873-876 (PGNP), and 891-894 (PGSP). The interval 734–894 (PGKPTLVCSS…PDKFIIPGSP (161 aa)) is 6 X 4 AA repeats of P-X-X-P. Disordered stretches follow at residues 780–806 (LGSAEGTGQREEDSECLKEPRQPNPDW) and 829–950 (RAGP…NSDQ). Over residues 787–800 (GQREEDSECLKEPR) the composition is skewed to basic and acidic residues. Residues 909–923 (DKSDFITFGKKEETK) show a composition bias toward basic and acidic residues.

It is found in the cell membrane. In terms of biological role, potential calcium-dependent cell-adhesion protein. May be involved in the establishment and maintenance of specific neuronal connections in the brain. In Homo sapiens (Human), this protein is Protocadherin alpha-13 (PCDHA13).